The following is a 119-amino-acid chain: MCGEPGCRHEQTAVKAGRSRNWAGSFAKTPGRLFGVGFIRLYQLTLSGFVGNSCRHIPTCSEYGYEAIARHGLWAGGWMALFRVARCGPGGTSGLDPVPEELDGSKRWWTPWRYWSRHR.

The protein belongs to the UPF0161 family.

It is found in the cell inner membrane. In terms of biological role, could be involved in insertion of integral membrane proteins into the membrane. The chain is Putative membrane protein insertion efficiency factor from Agrobacterium fabrum (strain C58 / ATCC 33970) (Agrobacterium tumefaciens (strain C58)).